An 83-amino-acid chain; its full sequence is Short neurotoxin B (83 aa).

A signal peptide spans 1-21 (MKTLLLTLVVVTIVCLDLGYT). Cystine bridges form between cysteine 24-cysteine 45, cysteine 38-cysteine 62, cysteine 64-cysteine 75, and cysteine 76-cysteine 81.

It belongs to the three-finger toxin family. Short-chain subfamily. Type I alpha-neurotoxin sub-subfamily. Expressed by the venom gland.

The protein resides in the secreted. Its function is as follows. Binds to muscle nicotinic acetylcholine receptor (nAChR) and inhibit acetylcholine from binding to the receptor, thereby impairing neuromuscular transmission. This chain is Short neurotoxin B, found in Laticauda laticaudata (Blue-ringed sea krait).